The following is a 210-amino-acid chain: Orotate phosphoribosyltransferase (210 aa).

Position 26 (lysine 26) interacts with 5-phospho-alpha-D-ribose 1-diphosphate. 34 to 35 (FF) lines the orotate pocket. 5-phospho-alpha-D-ribose 1-diphosphate is bound by residues 72–73 (YK), arginine 98, lysine 99, lysine 102, histidine 104, and 123–131 (DDVITAGTA). Threonine 127 and arginine 155 together coordinate orotate.

Belongs to the purine/pyrimidine phosphoribosyltransferase family. PyrE subfamily. In terms of assembly, homodimer. It depends on Mg(2+) as a cofactor.

The enzyme catalyses orotidine 5'-phosphate + diphosphate = orotate + 5-phospho-alpha-D-ribose 1-diphosphate. It functions in the pathway pyrimidine metabolism; UMP biosynthesis via de novo pathway; UMP from orotate: step 1/2. Catalyzes the transfer of a ribosyl phosphate group from 5-phosphoribose 1-diphosphate to orotate, leading to the formation of orotidine monophosphate (OMP). This is Orotate phosphoribosyltransferase from Legionella pneumophila (strain Paris).